Consider the following 257-residue polypeptide: tRNA (guanine-N(1)-)-methyltransferase (257 aa).

S-adenosyl-L-methionine contacts are provided by residues G112 and 136 to 141 (LGDYVL).

The protein belongs to the RNA methyltransferase TrmD family. Homodimer.

It is found in the cytoplasm. It catalyses the reaction guanosine(37) in tRNA + S-adenosyl-L-methionine = N(1)-methylguanosine(37) in tRNA + S-adenosyl-L-homocysteine + H(+). In terms of biological role, specifically methylates guanosine-37 in various tRNAs. The sequence is that of tRNA (guanine-N(1)-)-methyltransferase from Salinispora tropica (strain ATCC BAA-916 / DSM 44818 / JCM 13857 / NBRC 105044 / CNB-440).